A 240-amino-acid polypeptide reads, in one-letter code: Adenosylcobinamide-GDP ribazoletransferase (240 aa).

5 helical membrane-spanning segments follow: residues 31–51, 57–77, 109–129, 133–153, and 185–205; these read LLYY…ASHL, APLH…ALHL, IAVV…WVLV, VGAQ…GLFL, and LFCL…FAWL.

The protein belongs to the CobS family. Mg(2+) is required as a cofactor.

It is found in the cell inner membrane. It catalyses the reaction alpha-ribazole + adenosylcob(III)inamide-GDP = adenosylcob(III)alamin + GMP + H(+). The enzyme catalyses alpha-ribazole 5'-phosphate + adenosylcob(III)inamide-GDP = adenosylcob(III)alamin 5'-phosphate + GMP + H(+). It participates in cofactor biosynthesis; adenosylcobalamin biosynthesis; adenosylcobalamin from cob(II)yrinate a,c-diamide: step 7/7. Functionally, joins adenosylcobinamide-GDP and alpha-ribazole to generate adenosylcobalamin (Ado-cobalamin). Also synthesizes adenosylcobalamin 5'-phosphate from adenosylcobinamide-GDP and alpha-ribazole 5'-phosphate. This is Adenosylcobinamide-GDP ribazoletransferase from Pseudomonas putida (strain GB-1).